The primary structure comprises 67 residues: Large ribosomal subunit protein uL29 (67 aa).

Belongs to the universal ribosomal protein uL29 family.

The sequence is that of Large ribosomal subunit protein uL29 from Wolbachia pipientis wMel.